The chain runs to 800 residues: Nuclear cap-binding protein subunit 1 (800 aa).

Residues 1–26 (MSRRRAHDTEDEGYDHRRNKRRRVSE) are disordered. At Thr9 the chain carries Phosphothreonine. An MIF4G domain is found at 31 to 243 (EDRLESLILR…CLWAQIRKLR (213 aa)). The tract at residues 669–700 (LAKADSSSSDSEDDSSHKRKKPITHADKPSEE) is disordered.

The protein belongs to the NCBP1 family. Component of the nuclear cap-binding complex (CBC), a heterodimer composed of Cbp80 and Cbp20 that interacts with m7GpppG-capped RNA.

Its subcellular location is the nucleus. Component of the cap-binding complex (CBC), which binds cotranscriptionally to the 5'-cap of pre-mRNAs and is involved in various processes such as pre-mRNA splicing and RNA-mediated gene silencing (RNAi). The CBC complex is involved in miRNA-mediated RNA interference via its interaction with Ars2 and is required for primary microRNAs (miRNAs) processing. Also involved in innate immunity via the short interfering RNAs (siRNAs) processing machinery by restricting the viral RNA production. In the CBC complex, Cbp80 does not bind directly capped RNAs (m7GpppG-capped RNA) but is required to stabilize the movement of the N-terminal loop of Cbp20 and lock the CBC into a high affinity cap-binding state with the cap structure. In Drosophila sechellia (Fruit fly), this protein is Nuclear cap-binding protein subunit 1 (Cbp80).